The chain runs to 533 residues: MAFANLRKILISDSLDPCCRKILQDGGLQVVEKQNLSKEELIAELQDCEGLIVRSATKVTADVINAAEKLQVVGRAGTGVDNVDLEAATRKGVLVMNTPNGNSLSAAELTCGMLMCLARQIPQATASMKDGKWDRKKFMGTELNGKTLGILGLGRIGREVAARMQAFGMKTVGYDPIISPEVAASFGVQQLPLEEIWPLCDFITVHTPLLPSTTGLLNDSTFAQCKKGVRVVNCARGGIVDEGALLRALQSGQCAGAALDVFTEEPPRDRALVDHENVISCPHLGASTKEAQSRCGEEIAVQFVDMVKGKSLTGVVNAQALTSAFSPHTKPWIGLAEALGTLMHAWAGSPKGTIQVVTQGTSLKNAGTCLSPAVIVGLLREASKQADVNLVNAKLLVKEAGLNVTTSHSPGVPGEQGIGECLLTVALAGAPYQAVGLVQGTTPMLQMLNGAVFRPEVPLRRGQPLLLFRAQPSDPVMLPTMIGLLAEAGVQLLSYQTSKVSDGDTWHVMGLSSLLPSLDAWKQHVSEAFQFCF.

Ala-2 carries the post-translational modification N-acetylalanine. Ser-14 bears the Phosphoserine mark. Lys-21 is subject to N6-acetyllysine; alternate. Residue Lys-21 forms a Glycyl lysine isopeptide (Lys-Gly) (interchain with G-Cter in SUMO1); alternate linkage. Lys-21 participates in a covalent cross-link: Glycyl lysine isopeptide (Lys-Gly) (interchain with G-Cter in SUMO2); alternate. Lys-58 is subject to N6-acetyllysine. NAD(+) is bound by residues Thr-78, 155–156 (RI), Asp-175, Thr-207, 234–236 (CAR), and Asp-260. Thr-78 is modified (phosphothreonine). Arg-236 is an active-site residue. Glu-265 is a catalytic residue. Catalysis depends on His-283, which acts as the Proton donor. 283–286 (HLGA) is an NAD(+) binding site.

Belongs to the D-isomer specific 2-hydroxyacid dehydrogenase family. In terms of assembly, homotetramer. As to expression, liver, kidney, brain, testis.

It catalyses the reaction (2R)-3-phosphoglycerate + NAD(+) = 3-phosphooxypyruvate + NADH + H(+). Its pathway is amino-acid biosynthesis; L-serine biosynthesis; L-serine from 3-phospho-D-glycerate: step 1/3. Functionally, catalyzes the reversible oxidation of 3-phospho-D-glycerate to 3-phosphonooxypyruvate, the first step of the phosphorylated L-serine biosynthesis pathway. Does not catalyze the reversible oxidation of 2-hydroxyglutarate to 2-oxoglutarate and the reversible oxidation of (S)-malate to oxaloacetate. The sequence is that of D-3-phosphoglycerate dehydrogenase (Phgdh) from Rattus norvegicus (Rat).